A 610-amino-acid polypeptide reads, in one-letter code: Protein Spindly-B (610 aa).

Positions 1–392 form a coiled coil; the sequence is MEESETVLKL…IDKVKDELSL (392 aa). The disordered stretch occupies residues 474-610; it reads TEAHGVSDAT…KPATAQCPQQ (137 aa). 2 stretches are compositionally biased toward basic and acidic residues: residues 493–511 and 535–548; these read SDDK…KDQD and RIME…DLNK. Residues 549 to 561 are compositionally biased toward polar residues; the sequence is RNPNNCTITSIHP. Positions 570–583 are enriched in basic and acidic residues; the sequence is SELKKVDEEQEKRK.

It belongs to the Spindly family.

It is found in the chromosome. The protein resides in the centromere. The protein localises to the kinetochore. In terms of biological role, required for the localization of dynein and dynactin to the mitotic kintochore. Dynein is believed to control the initial lateral interaction between the kinetochore and spindle microtubules and to facilitate the subsequent formation of end-on kinetochore-microtubule attachments mediated by the NDC80 complex. The sequence is that of Protein Spindly-B (spdl1-b) from Xenopus laevis (African clawed frog).